The primary structure comprises 394 residues: Chorismate synthase (394 aa).

Arg-62 provides a ligand contact to NADP(+). Residues 144 to 146 (RAS), Gly-307, 322 to 326 (KPTPT), and Arg-349 contribute to the FMN site.

It belongs to the chorismate synthase family. In terms of assembly, homotetramer. FMNH2 serves as cofactor.

The catalysed reaction is 5-O-(1-carboxyvinyl)-3-phosphoshikimate = chorismate + phosphate. The protein operates within metabolic intermediate biosynthesis; chorismate biosynthesis; chorismate from D-erythrose 4-phosphate and phosphoenolpyruvate: step 7/7. In terms of biological role, catalyzes the anti-1,4-elimination of the C-3 phosphate and the C-6 proR hydrogen from 5-enolpyruvylshikimate-3-phosphate (EPSP) to yield chorismate, which is the branch point compound that serves as the starting substrate for the three terminal pathways of aromatic amino acid biosynthesis. This reaction introduces a second double bond into the aromatic ring system. The sequence is that of Chorismate synthase from Acetivibrio thermocellus (strain ATCC 27405 / DSM 1237 / JCM 9322 / NBRC 103400 / NCIMB 10682 / NRRL B-4536 / VPI 7372) (Clostridium thermocellum).